A 509-amino-acid chain; its full sequence is Lanosterol 14-alpha demethylase (509 aa).

A helical transmembrane segment spans residues 30 to 50 (GNLLSMLLIACAFTLSLVYLF). A heme-binding site is contributed by C455.

The protein belongs to the cytochrome P450 family. Heme serves as cofactor. In terms of processing, ubiquitinated by MARCHF6, leading to proteasomal degradation.

It is found in the endoplasmic reticulum membrane. The protein localises to the microsome membrane. It catalyses the reaction a 14alpha-methyl steroid + 3 reduced [NADPH--hemoprotein reductase] + 3 O2 = a Delta(14) steroid + formate + 3 oxidized [NADPH--hemoprotein reductase] + 4 H2O + 4 H(+). It carries out the reaction lanosterol + 3 reduced [NADPH--hemoprotein reductase] + 3 O2 = 4,4-dimethyl-5alpha-cholesta-8,14,24-trien-3beta-ol + formate + 3 oxidized [NADPH--hemoprotein reductase] + 4 H2O + 4 H(+). The catalysed reaction is 24,25-dihydrolanosterol + 3 reduced [NADPH--hemoprotein reductase] + 3 O2 = 4,4-dimethyl-8,14-cholestadien-3beta-ol + formate + 3 oxidized [NADPH--hemoprotein reductase] + 4 H2O + 4 H(+). The enzyme catalyses a 14alpha-methyl steroid + reduced [NADPH--hemoprotein reductase] + O2 = a 14alpha-hydroxymethyl steroid + oxidized [NADPH--hemoprotein reductase] + H2O + H(+). It catalyses the reaction a 14alpha-hydroxymethyl steroid + reduced [NADPH--hemoprotein reductase] + O2 = a 14alpha-formyl steroid + oxidized [NADPH--hemoprotein reductase] + 2 H2O + H(+). It carries out the reaction a 14alpha-formyl steroid + reduced [NADPH--hemoprotein reductase] + O2 = a Delta(14) steroid + formate + oxidized [NADPH--hemoprotein reductase] + H2O + 2 H(+). The catalysed reaction is lanosterol + reduced [NADPH--hemoprotein reductase] + O2 = 32-hydroxylanosterol + oxidized [NADPH--hemoprotein reductase] + H2O + H(+). The enzyme catalyses 32-hydroxylanosterol + reduced [NADPH--hemoprotein reductase] + O2 = 32-oxolanosterol + oxidized [NADPH--hemoprotein reductase] + 2 H2O + H(+). It catalyses the reaction 32-oxolanosterol + reduced [NADPH--hemoprotein reductase] + O2 = 4,4-dimethyl-5alpha-cholesta-8,14,24-trien-3beta-ol + formate + oxidized [NADPH--hemoprotein reductase] + H2O + 2 H(+). It carries out the reaction 24,25-dihydrolanosterol + reduced [NADPH--hemoprotein reductase] + O2 = 32-hydroxy-24,25-dihydrolanosterol + oxidized [NADPH--hemoprotein reductase] + H2O + H(+). The catalysed reaction is 32-hydroxy-24,25-dihydrolanosterol + reduced [NADPH--hemoprotein reductase] + O2 = 32-oxo-24,25-dihydrolanosterol + oxidized [NADPH--hemoprotein reductase] + 2 H2O + H(+). The enzyme catalyses 32-oxo-24,25-dihydrolanosterol + reduced [NADPH--hemoprotein reductase] + O2 = 4,4-dimethyl-8,14-cholestadien-3beta-ol + formate + oxidized [NADPH--hemoprotein reductase] + H2O + 2 H(+). The protein operates within steroid biosynthesis; zymosterol biosynthesis; zymosterol from lanosterol: step 1/6. Its activity is regulated as follows. Inhibited by azalanstat. Inhibited by azole antifungal agents ketoconazole, itraconazole and fluconazole. Its function is as follows. Sterol 14alpha-demethylase that plays a critical role in the cholesterol biosynthesis pathway, being cholesterol the major sterol component in mammalian membranes as well as a precursor for bile acid and steroid hormone synthesis. Cytochrome P450 monooxygenase that catalyzes the three-step oxidative removal of the 14alpha-methyl group (C-32) of sterols such as lanosterol (lanosta-8,24-dien-3beta-ol) and 24,25-dihydrolanosterol (DHL) in the form of formate, and converts the sterols to 4,4-dimethyl-5alpha-cholesta-8,14,24-trien-3beta-ol and 4,4-dimethyl-8,14-cholestadien-3beta-ol, respectively, which are intermediates of cholesterol biosynthesis. Can also demethylate substrates not intrinsic to mammals, such as eburicol (24-methylene-24,25-dihydrolanosterol), but at a lower rate than DHL. In Macaca fascicularis (Crab-eating macaque), this protein is Lanosterol 14-alpha demethylase.